Here is a 371-residue protein sequence, read N- to C-terminus: Alanine dehydrogenase (371 aa).

Substrate-binding residues include Arg-15 and Lys-75. His-96 functions as the Proton donor/acceptor in the catalytic mechanism. Residues Ser-134, 178-179, Asp-198, Lys-203, Ser-220, 239-240, 267-270, Arg-279, and 298-301 each bind NAD(+); these read TA, VL, IAID, and VANM. The Proton donor/acceptor role is filled by Asp-270. Residues Glu-323 and His-327 each coordinate Mg(2+).

This sequence belongs to the AlaDH/PNT family. Homohexamer. Trimer of dimers. Mg(2+) is required as a cofactor.

The protein localises to the secreted. It carries out the reaction L-alanine + NAD(+) + H2O = pyruvate + NH4(+) + NADH + H(+). It participates in amino-acid degradation; L-alanine degradation via dehydrogenase pathway; NH(3) and pyruvate from L-alanine: step 1/1. In terms of biological role, catalyzes the reversible reductive amination of pyruvate to L-alanine. However, since the physiological environment of M.tuberculosis has a neutral pH, it can be assumed that the enzyme catalyzes exclusively the formation of L-alanine. May play a role in cell wall synthesis as L-alanine is an important constituent of the peptidoglycan layer. The sequence is that of Alanine dehydrogenase (ald) from Mycobacterium tuberculosis (strain CDC 1551 / Oshkosh).